Here is a 306-residue protein sequence, read N- to C-terminus: Aspartate carbamoyltransferase catalytic subunit (306 aa).

Residues arginine 56 and threonine 57 each contribute to the carbamoyl phosphate site. Lysine 84 is a binding site for L-aspartate. Positions 106, 134, and 137 each coordinate carbamoyl phosphate. Arginine 167 and arginine 221 together coordinate L-aspartate. 2 residues coordinate carbamoyl phosphate: glycine 262 and proline 263.

This sequence belongs to the aspartate/ornithine carbamoyltransferase superfamily. ATCase family. Heterododecamer (2C3:3R2) of six catalytic PyrB chains organized as two trimers (C3), and six regulatory PyrI chains organized as three dimers (R2).

The catalysed reaction is carbamoyl phosphate + L-aspartate = N-carbamoyl-L-aspartate + phosphate + H(+). It functions in the pathway pyrimidine metabolism; UMP biosynthesis via de novo pathway; (S)-dihydroorotate from bicarbonate: step 2/3. In terms of biological role, catalyzes the condensation of carbamoyl phosphate and aspartate to form carbamoyl aspartate and inorganic phosphate, the committed step in the de novo pyrimidine nucleotide biosynthesis pathway. The polypeptide is Aspartate carbamoyltransferase catalytic subunit (Desulforudis audaxviator (strain MP104C)).